A 324-amino-acid chain; its full sequence is HTH-type transcriptional regulator CysB (324 aa).

The HTH lysR-type domain maps to 1–59; that stretch reads MKLQQLRYIVEVVNHNLNVSSTAEGLYTSQPGISKQVRMLEDELGIQIFARSGKHLTQV. Residues 19 to 38 constitute a DNA-binding region (H-T-H motif); sequence VSSTAEGLYTSQPGISKQVR.

Belongs to the LysR transcriptional regulatory family. As to quaternary structure, homotetramer.

It is found in the cytoplasm. In terms of biological role, this protein is a positive regulator of gene expression for the cysteine regulon, a system of 10 or more loci involved in the biosynthesis of L-cysteine from inorganic sulfate. The inducer for CysB is N-acetylserine. CysB inhibits its own transcription. This Salmonella typhimurium (strain LT2 / SGSC1412 / ATCC 700720) protein is HTH-type transcriptional regulator CysB (cysB).